The following is a 135-amino-acid chain: Large ribosomal subunit protein mL54 (135 aa).

This sequence belongs to the mitochondrion-specific ribosomal protein mL54 family. In terms of assembly, component of the mitochondrial ribosome large subunit (39S) which comprises a 16S rRNA and about 50 distinct proteins.

It is found in the mitochondrion. In Danio rerio (Zebrafish), this protein is Large ribosomal subunit protein mL54 (mrpl54).